Consider the following 146-residue polypeptide: 3-dehydroquinate dehydratase (146 aa).

The Proton acceptor role is filled by Tyr23. Residues Asn74, His80, and Asp87 each contribute to the substrate site. His100 functions as the Proton donor in the catalytic mechanism. Substrate-binding positions include 101–102 (IS) and Arg111.

Belongs to the type-II 3-dehydroquinase family. Homododecamer.

The catalysed reaction is 3-dehydroquinate = 3-dehydroshikimate + H2O. It participates in metabolic intermediate biosynthesis; chorismate biosynthesis; chorismate from D-erythrose 4-phosphate and phosphoenolpyruvate: step 3/7. Its function is as follows. Catalyzes a trans-dehydration via an enolate intermediate. The sequence is that of 3-dehydroquinate dehydratase from Bacillus cereus (strain AH820).